The sequence spans 146 residues: MSAYKTVVVGTDGSDSSMRAVDRAAQIAGADAKLIIASAYLPQHEDARAADILKDESYKVTGTAPIYEILHDAKERAHNAGAKNVEERPIVGAPVDALVNLADEEKADLLVVGNVGLSTIAGRLLGSVPANVSRRAKVDVLIVHTT.

It belongs to the universal stress protein A family.

This chain is Universal stress protein MT1672, found in Mycobacterium tuberculosis (strain CDC 1551 / Oshkosh).